A 206-amino-acid chain; its full sequence is Large ribosomal subunit protein uL4 (206 aa).

Residues 63–97 (MYKQKGTGRARHHSARAPQFRGGGKAHGPVVRSHE) form a disordered region. Over residues 64 to 77 (YKQKGTGRARHHSA) the composition is skewed to basic residues.

This sequence belongs to the universal ribosomal protein uL4 family. Part of the 50S ribosomal subunit.

Its function is as follows. One of the primary rRNA binding proteins, this protein initially binds near the 5'-end of the 23S rRNA. It is important during the early stages of 50S assembly. It makes multiple contacts with different domains of the 23S rRNA in the assembled 50S subunit and ribosome. In terms of biological role, forms part of the polypeptide exit tunnel. The sequence is that of Large ribosomal subunit protein uL4 from Rhizobium etli (strain ATCC 51251 / DSM 11541 / JCM 21823 / NBRC 15573 / CFN 42).